Consider the following 203-residue polypeptide: Pyridoxine/pyridoxamine 5'-phosphate oxidase (203 aa).

FMN-binding positions include 50–55 (RMVLLK), 65–66 (YT), K71, K72, and Q94. K55 contributes to the substrate binding site. Positions 112, 116, and 120 each coordinate substrate. Residues 129–130 (QS) and W174 each bind FMN. 180-182 (RLH) contributes to the substrate binding site. R184 contacts FMN.

This sequence belongs to the pyridoxamine 5'-phosphate oxidase family. As to quaternary structure, homodimer. FMN serves as cofactor.

The enzyme catalyses pyridoxamine 5'-phosphate + O2 + H2O = pyridoxal 5'-phosphate + H2O2 + NH4(+). It catalyses the reaction pyridoxine 5'-phosphate + O2 = pyridoxal 5'-phosphate + H2O2. Its pathway is cofactor metabolism; pyridoxal 5'-phosphate salvage; pyridoxal 5'-phosphate from pyridoxamine 5'-phosphate: step 1/1. It participates in cofactor metabolism; pyridoxal 5'-phosphate salvage; pyridoxal 5'-phosphate from pyridoxine 5'-phosphate: step 1/1. Functionally, catalyzes the oxidation of either pyridoxine 5'-phosphate (PNP) or pyridoxamine 5'-phosphate (PMP) into pyridoxal 5'-phosphate (PLP). This chain is Pyridoxine/pyridoxamine 5'-phosphate oxidase, found in Brucella canis (strain ATCC 23365 / NCTC 10854 / RM-666).